The sequence spans 677 residues: Methionine--tRNA ligase (677 aa).

A 'HIGH' region motif is present at residues 15–25; sequence PYANGSIHLGH. The Zn(2+) site is built by Cys146, Cys149, Cys159, and Cys162. The 'KMSKS' region motif lies at 333 to 337; the sequence is KMSKS. Residue Lys336 participates in ATP binding. Residues 575–677 enclose the tRNA-binding domain; the sequence is DFAKVDLRVA…AGAKPGHQVK (103 aa).

The protein belongs to the class-I aminoacyl-tRNA synthetase family. MetG type 1 subfamily. In terms of assembly, homodimer. Zn(2+) serves as cofactor.

The protein resides in the cytoplasm. The enzyme catalyses tRNA(Met) + L-methionine + ATP = L-methionyl-tRNA(Met) + AMP + diphosphate. Functionally, is required not only for elongation of protein synthesis but also for the initiation of all mRNA translation through initiator tRNA(fMet) aminoacylation. The polypeptide is Methionine--tRNA ligase (Escherichia coli (strain UTI89 / UPEC)).